A 116-amino-acid polypeptide reads, in one-letter code: Large ribosomal subunit protein bL17 (116 aa).

This sequence belongs to the bacterial ribosomal protein bL17 family. As to quaternary structure, part of the 50S ribosomal subunit. Contacts protein L32.

This chain is Large ribosomal subunit protein bL17, found in Wolinella succinogenes (strain ATCC 29543 / DSM 1740 / CCUG 13145 / JCM 31913 / LMG 7466 / NCTC 11488 / FDC 602W) (Vibrio succinogenes).